A 399-amino-acid chain; its full sequence is Protein IQ-DOMAIN 25 (399 aa).

Positions 1–8 (MRKNLTKL) match the Nuclear localization signal motif. Calmodulin-binding stretches follow at residues 81–91 (KERRTHAIAVA) and 99–110 (DAAVAAAKAAAA). IQ domains lie at 130–158 (EHRA…GVVK) and 159–181 (IQAL…SMEA). Disordered stretches follow at residues 198 to 219 (NGNA…ENRN), 262 to 302 (SPLS…SPAR), and 346 to 377 (LRSH…VRMQ). Residues 285–294 (KFPTAQSTPR) show a composition bias toward polar residues.

The protein belongs to the IQD family. In terms of assembly, binds to multiple calmodulin (CaM) in the presence of Ca(2+) and CaM-like proteins.

It localises to the nucleus. Its subcellular location is the cell membrane. May be involved in cooperative interactions with calmodulins or calmodulin-like proteins. Recruits calmodulin proteins to microtubules, thus being a potential scaffold in cellular signaling and trafficking. May associate with nucleic acids and regulate gene expression at the transcriptional or post-transcriptional level. In Arabidopsis thaliana (Mouse-ear cress), this protein is Protein IQ-DOMAIN 25.